A 493-amino-acid polypeptide reads, in one-letter code: CBL-interacting protein kinase 26 (493 aa).

The region spanning 12-266 (YEIGRQLGQG…IPKIKRSAWY (255 aa)) is the Protein kinase domain. ATP-binding positions include 18–26 (LGQGNFAKV) and lysine 41. Residue aspartate 134 is the Proton acceptor of the active site. The interval 152–181 (DFGLSALSESKRHDGLLHTTCGTPAYVAPE) is activation loop. Residues 311 to 332 (KVYTNGEATTSDSPECSNSDGK) form a disordered region. Over residues 316–332 (GEATTSDSPECSNSDGK) the composition is skewed to polar residues. Residues 320 to 360 (TSDSPECSNSDGKQASLSLPNLNAFDIISLSTGFDLSNLFE) enclose the NAF domain. The PPI stretch occupies residues 365 to 394 (RREERFTTRQPAAAIFAKLNELARRFKLKI). The interval 465–493 (GQHQQPEQSMQGMQGEQQPSRLPSQQPQG) is disordered.

The protein belongs to the protein kinase superfamily. CAMK Ser/Thr protein kinase family. SNF1 subfamily. Mn(2+) serves as cofactor.

It catalyses the reaction L-seryl-[protein] + ATP = O-phospho-L-seryl-[protein] + ADP + H(+). The catalysed reaction is L-threonyl-[protein] + ATP = O-phospho-L-threonyl-[protein] + ADP + H(+). Its function is as follows. CIPK serine-threonine protein kinases interact with CBL proteins. Binding of a CBL protein to the regulatory NAF domain of CIPK protein lead to the activation of the kinase in a calcium-dependent manner. In Oryza sativa subsp. japonica (Rice), this protein is CBL-interacting protein kinase 26 (CIPK26).